The primary structure comprises 157 residues: Small ribosomal subunit protein uS7 (157 aa).

The protein belongs to the universal ribosomal protein uS7 family. As to quaternary structure, part of the 30S ribosomal subunit. Contacts proteins S9 and S11.

Its function is as follows. One of the primary rRNA binding proteins, it binds directly to 16S rRNA where it nucleates assembly of the head domain of the 30S subunit. Is located at the subunit interface close to the decoding center, probably blocks exit of the E-site tRNA. This chain is Small ribosomal subunit protein uS7, found in Roseiflexus castenholzii (strain DSM 13941 / HLO8).